A 100-amino-acid chain; its full sequence is MPRPKKCRNLSCRAPYSMLKPNGIPSVELEKIHIDADEFEALNLGDVQKMSQLDAAASMGISRQTFGYLLASARKKVATAITQGHGLVLPQSTDTKREVL.

It belongs to the UPF0251 family.

This is UPF0251 protein swp_0615 from Shewanella piezotolerans (strain WP3 / JCM 13877).